A 462-amino-acid polypeptide reads, in one-letter code: Argininosuccinate lyase (462 aa).

Belongs to the lyase 1 family. Argininosuccinate lyase subfamily.

It localises to the cytoplasm. It carries out the reaction 2-(N(omega)-L-arginino)succinate = fumarate + L-arginine. It participates in amino-acid biosynthesis; L-arginine biosynthesis; L-arginine from L-ornithine and carbamoyl phosphate: step 3/3. This chain is Argininosuccinate lyase, found in Prochlorococcus marinus (strain MIT 9211).